The primary structure comprises 236 residues: Small ribosomal subunit protein uS3 (236 aa).

Residues 39-107 enclose the KH type-2 domain; that stretch reads IREFLTEELK…DTSLNIVEVR (69 aa). The tract at residues 214-236 is disordered; sequence ASERRAVEGDNQGSSSNRRRENA.

This sequence belongs to the universal ribosomal protein uS3 family. In terms of assembly, part of the 30S ribosomal subunit. Forms a tight complex with proteins S10 and S14.

Its function is as follows. Binds the lower part of the 30S subunit head. Binds mRNA in the 70S ribosome, positioning it for translation. The protein is Small ribosomal subunit protein uS3 of Brucella abortus (strain S19).